The chain runs to 120 residues: NAD(P)H-quinone oxidoreductase subunit 3, chloroplastic (120 aa).

3 helical membrane passes run 9-29 (FFWA…FISG), 64-84 (MFAL…PWAM), and 88-108 (VLGV…IIGL).

It belongs to the complex I subunit 3 family. As to quaternary structure, NDH is composed of at least 16 different subunits, 5 of which are encoded in the nucleus.

It localises to the plastid. The protein resides in the chloroplast thylakoid membrane. The enzyme catalyses a plastoquinone + NADH + (n+1) H(+)(in) = a plastoquinol + NAD(+) + n H(+)(out). It catalyses the reaction a plastoquinone + NADPH + (n+1) H(+)(in) = a plastoquinol + NADP(+) + n H(+)(out). Its function is as follows. NDH shuttles electrons from NAD(P)H:plastoquinone, via FMN and iron-sulfur (Fe-S) centers, to quinones in the photosynthetic chain and possibly in a chloroplast respiratory chain. The immediate electron acceptor for the enzyme in this species is believed to be plastoquinone. Couples the redox reaction to proton translocation, and thus conserves the redox energy in a proton gradient. In Atropa belladonna (Belladonna), this protein is NAD(P)H-quinone oxidoreductase subunit 3, chloroplastic.